The sequence spans 418 residues: D-inositol 3-phosphate glycosyltransferase (418 aa).

H9 lines the 1D-myo-inositol 3-phosphate pocket. UDP-N-acetyl-alpha-D-glucosamine-binding positions include 15–16 (QP) and G23. 1D-myo-inositol 3-phosphate contacts are provided by residues 20 to 25 (DSGGMN), K78, Y110, T134, and R154. Residues R231, K236, and R294 each contribute to the UDP-N-acetyl-alpha-D-glucosamine site. Residues Y303, R304, and A306 each coordinate Mg(2+). Residues E316 and E324 each coordinate UDP-N-acetyl-alpha-D-glucosamine. Position 330 (T330) interacts with Mg(2+).

This sequence belongs to the glycosyltransferase group 1 family. MshA subfamily. In terms of assembly, homodimer.

It carries out the reaction 1D-myo-inositol 3-phosphate + UDP-N-acetyl-alpha-D-glucosamine = 1D-myo-inositol 2-acetamido-2-deoxy-alpha-D-glucopyranoside 3-phosphate + UDP + H(+). Its function is as follows. Catalyzes the transfer of a N-acetyl-glucosamine moiety to 1D-myo-inositol 3-phosphate to produce 1D-myo-inositol 2-acetamido-2-deoxy-glucopyranoside 3-phosphate in the mycothiol biosynthesis pathway. The polypeptide is D-inositol 3-phosphate glycosyltransferase (Corynebacterium glutamicum (strain R)).